The sequence spans 110 residues: Protein YcgL (110 aa).

One can recognise a YcgL domain in the interval 14-98 (MFCVIYRSSK…PPEDLLKQHL (85 aa)). Residues 88-110 (PPPEDLLKQHLSSVGQNTSHADR) are disordered. Residues 97-110 (HLSSVGQNTSHADR) show a composition bias toward polar residues.

The polypeptide is Protein YcgL (Salmonella typhi).